Consider the following 245-residue polypeptide: tRNA pseudouridine synthase A (245 aa).

Catalysis depends on D52, which acts as the Nucleophile. Y111 provides a ligand contact to substrate.

It belongs to the tRNA pseudouridine synthase TruA family. In terms of assembly, homodimer.

The catalysed reaction is uridine(38/39/40) in tRNA = pseudouridine(38/39/40) in tRNA. Its function is as follows. Formation of pseudouridine at positions 38, 39 and 40 in the anticodon stem and loop of transfer RNAs. This Rickettsia typhi (strain ATCC VR-144 / Wilmington) protein is tRNA pseudouridine synthase A.